The primary structure comprises 446 residues: Sorting nexin-30 (446 aa).

Residues 1–18 (MSGSSTPKSLPTSGQQSL) are compositionally biased toward polar residues. A disordered region spans residues 1-84 (MSGSSTPKSL…SSPASSSSLL (84 aa)). The span at 70–84 (TPADTSSPASSSSLL) shows a compositional bias: low complexity. The PX domain occupies 98–219 (RDLFVTVDDP…VFLTAKDLNS (122 aa)). A 1,2-diacyl-sn-glycero-3-phospho-(1D-myo-inositol-3-phosphate) contacts are provided by Arg141, Gln143, Lys171, and Arg185. One can recognise a BAR domain in the interval 243–446 (KLRNRPVEFA…PLLQDKQEPK (204 aa)).

It belongs to the sorting nexin family.

The protein localises to the early endosome membrane. Its function is as follows. Involved in the regulation of endocytosis and in several stages of intracellular trafficking. Together with snx4, involved in autophagosome assembly. This Xenopus tropicalis (Western clawed frog) protein is Sorting nexin-30 (snx30).